Here is a 106-residue protein sequence, read N- to C-terminus: Thioredoxin (106 aa).

One can recognise a Thioredoxin domain in the interval 2–106 (VNFLKTKADF…GLREKIKKNK (105 aa)). Catalysis depends on nucleophile residues cysteine 32 and cysteine 35. A disulfide bridge links cysteine 32 with cysteine 35.

It belongs to the thioredoxin family.

Its subcellular location is the cytoplasm. Functionally, participates in various redox reactions through the reversible oxidation of its active center dithiol to a disulfide and catalyzes dithiol-disulfide exchange reactions. This is Thioredoxin (THIO) from Geodia cydonium (Sponge).